Reading from the N-terminus, the 577-residue chain is CTP synthase (577 aa).

Residues 1 to 268 (MDPAFIFITG…GALLCERLRL (268 aa)) are amidoligase domain. Ser-14 provides a ligand contact to CTP. Position 14 (Ser-14) interacts with UTP. 15–20 (SLGKGI) serves as a coordination point for ATP. Tyr-55 contacts L-glutamine. Asp-72 is a binding site for ATP. Residues Asp-72 and Glu-142 each contribute to the Mg(2+) site. Residues 149–151 (DIE), 189–194 (KTKPLQ), and Lys-225 each bind CTP. Residues 189–194 (KTKPLQ) and Lys-225 each bind UTP. The 243-residue stretch at 333–575 (TVALVGKYVS…VAAGLERKDS (243 aa)) folds into the Glutamine amidotransferase type-1 domain. Gly-396 is an L-glutamine binding site. The active-site Nucleophile; for glutamine hydrolysis is the Cys-423. Residues 424–427 (LGMQ), Glu-447, and Arg-503 each bind L-glutamine. Catalysis depends on residues His-548 and Glu-550.

Belongs to the CTP synthase family. In terms of assembly, homotetramer.

The catalysed reaction is UTP + L-glutamine + ATP + H2O = CTP + L-glutamate + ADP + phosphate + 2 H(+). The enzyme catalyses L-glutamine + H2O = L-glutamate + NH4(+). It catalyses the reaction UTP + NH4(+) + ATP = CTP + ADP + phosphate + 2 H(+). Its pathway is pyrimidine metabolism; CTP biosynthesis via de novo pathway; CTP from UDP: step 2/2. Allosterically activated by GTP, when glutamine is the substrate; GTP has no effect on the reaction when ammonia is the substrate. The allosteric effector GTP functions by stabilizing the protein conformation that binds the tetrahedral intermediate(s) formed during glutamine hydrolysis. Inhibited by the product CTP, via allosteric rather than competitive inhibition. In terms of biological role, catalyzes the ATP-dependent amination of UTP to CTP with either L-glutamine or ammonia as the source of nitrogen. Regulates intracellular CTP levels through interactions with the four ribonucleotide triphosphates. The protein is CTP synthase of Treponema pallidum (strain Nichols).